A 258-amino-acid polypeptide reads, in one-letter code: Aspartate/glutamate leucyltransferase (258 aa).

The protein belongs to the R-transferase family. Bpt subfamily.

It is found in the cytoplasm. It catalyses the reaction N-terminal L-glutamyl-[protein] + L-leucyl-tRNA(Leu) = N-terminal L-leucyl-L-glutamyl-[protein] + tRNA(Leu) + H(+). The enzyme catalyses N-terminal L-aspartyl-[protein] + L-leucyl-tRNA(Leu) = N-terminal L-leucyl-L-aspartyl-[protein] + tRNA(Leu) + H(+). Its function is as follows. Functions in the N-end rule pathway of protein degradation where it conjugates Leu from its aminoacyl-tRNA to the N-termini of proteins containing an N-terminal aspartate or glutamate. The sequence is that of Aspartate/glutamate leucyltransferase from Rhizobium johnstonii (strain DSM 114642 / LMG 32736 / 3841) (Rhizobium leguminosarum bv. viciae).